The sequence spans 306 residues: Enoyl-CoA isomerase/hydratase MYCGRDRAFT_76805 (306 aa).

Residues 103–107 and Gly-150 each bind substrate; that span reads AGADL.

Belongs to the enoyl-CoA hydratase/isomerase family.

It carries out the reaction a (3S)-3-hydroxyacyl-CoA = a (2E)-enoyl-CoA + H2O. The catalysed reaction is a 4-saturated-(3S)-3-hydroxyacyl-CoA = a (3E)-enoyl-CoA + H2O. The protein operates within siderophore biosynthesis. In terms of biological role, enoyl-CoA isomerase/hydratase involved in the biosynthesis of a ferrichrome A-like siderophore which may contribute to organismal virulence. The first step of siderophore biosynthesis is performed by the HMG-CoA synthase (HMGS) MYCGRDRAFT_54740 which catalyzes the generation of HMG-CoA and CoA using acetoacetyl-CoA and acetyl-CoA as substrates. The enoyl-CoA isomerase/hydratase MYCGRDRAFT_76805 then catalyzes the conversion of HMG-CoA to methylglutaconyl-CoA. The acyltransferase MYCGRDRAFT_85486 then fuses methylglutaconyl-CoA with hydroxyornithine to yield methylglutaconyl hydroxyornithine. Methylglutaconyl hydroxyornithine is then available for use by the nonribosomal peptide synthetase NRPS2 to generate the ferrichrome A-like siderophore. The protein is Enoyl-CoA isomerase/hydratase MYCGRDRAFT_76805 of Zymoseptoria tritici (strain CBS 115943 / IPO323) (Speckled leaf blotch fungus).